Reading from the N-terminus, the 314-residue chain is Solute carrier family 25 member 44 (314 aa).

Solcar repeat units lie at residues 18–100 (KKFY…TRKF), 107–210 (SNTV…YAEQ), and 220–302 (PHIV…LKKL). Transmembrane regions (helical) follow at residues 20-42 (FYVF…TLIR), 71-90 (TGLY…GQCY), 113-133 (LVAG…IDVV), 185-201 (GYVA…AVWW), 222-239 (IVFQ…ASIL), and 278-296 (LSAR…VVGY).

Belongs to the mitochondrial carrier (TC 2.A.29) family.

The protein resides in the mitochondrion membrane. The catalysed reaction is L-valine(in) = L-valine(out). It carries out the reaction L-leucine(in) = L-leucine(out). Mitochondrial solute transporter which transports branched-chain amino acid (BCAA; valine, leucine and isoleucine) into mitochondria in brown adipose tissue (BAT). BAT is involved in BCAA catabolism and actively utilizes BCAA in the mitochondria for thermogenesis. This is Solute carrier family 25 member 44 from Homo sapiens (Human).